The sequence spans 340 residues: Phosphoribosylformylglycinamidine cyclo-ligase (340 aa).

The protein belongs to the AIR synthase family.

It localises to the cytoplasm. The enzyme catalyses 2-formamido-N(1)-(5-O-phospho-beta-D-ribosyl)acetamidine + ATP = 5-amino-1-(5-phospho-beta-D-ribosyl)imidazole + ADP + phosphate + H(+). Its pathway is purine metabolism; IMP biosynthesis via de novo pathway; 5-amino-1-(5-phospho-D-ribosyl)imidazole from N(2)-formyl-N(1)-(5-phospho-D-ribosyl)glycinamide: step 2/2. The sequence is that of Phosphoribosylformylglycinamidine cyclo-ligase from Streptococcus pneumoniae (strain 70585).